We begin with the raw amino-acid sequence, 476 residues long: Sulfate adenylyltransferase subunit 1 (476 aa).

The tr-type G domain occupies 24–241; sequence KSLLRFLTCG…EDVDFVQEQE (218 aa). The interval 33–40 is G1; sequence GSVDDGKS. Residue 33–40 participates in GTP binding; it reads GSVDDGKS. Positions 91 to 95 are G2; it reads GITID. The segment at 112–115 is G3; that stretch reads DTPG. Residues 112 to 116 and 167 to 170 each bind GTP; these read DTPGH and NKMD. The interval 167–170 is G4; the sequence is NKMD. The interval 205–207 is G5; that stretch reads SAL.

It belongs to the TRAFAC class translation factor GTPase superfamily. Classic translation factor GTPase family. CysN/NodQ subfamily. In terms of assembly, heterodimer composed of CysD, the smaller subunit, and CysN.

It carries out the reaction sulfate + ATP + H(+) = adenosine 5'-phosphosulfate + diphosphate. It functions in the pathway sulfur metabolism; hydrogen sulfide biosynthesis; sulfite from sulfate: step 1/3. With CysD forms the ATP sulfurylase (ATPS) that catalyzes the adenylation of sulfate producing adenosine 5'-phosphosulfate (APS) and diphosphate, the first enzymatic step in sulfur assimilation pathway. APS synthesis involves the formation of a high-energy phosphoric-sulfuric acid anhydride bond driven by GTP hydrolysis by CysN coupled to ATP hydrolysis by CysD. The polypeptide is Sulfate adenylyltransferase subunit 1 (Photobacterium profundum (strain SS9)).